A 384-amino-acid polypeptide reads, in one-letter code: Putative pectate lyase 2 (384 aa).

The first 23 residues, 1 to 23 (MASLFLTIISLLFAAFSSSVVEA), serve as a signal peptide directing secretion. Positions 182, 206, and 210 each coordinate Ca(2+). Residue R262 is part of the active site.

The protein belongs to the polysaccharide lyase 1 family. It depends on Ca(2+) as a cofactor.

It carries out the reaction Eliminative cleavage of (1-&gt;4)-alpha-D-galacturonan to give oligosaccharides with 4-deoxy-alpha-D-galact-4-enuronosyl groups at their non-reducing ends.. The protein operates within glycan metabolism; pectin degradation; 2-dehydro-3-deoxy-D-gluconate from pectin: step 2/5. The chain is Putative pectate lyase 2 from Arabidopsis thaliana (Mouse-ear cress).